The primary structure comprises 284 residues: Shikimate dehydrogenase (NADP(+)) (284 aa).

Shikimate is bound by residues 20–22 and serine 67; that span reads SIS. Lysine 71 acts as the Proton acceptor in catalysis. An NADP(+)-binding site is contributed by aspartate 83. The shikimate site is built by asparagine 92 and aspartate 107. NADP(+) contacts are provided by residues 129–133 and isoleucine 227; that span reads GAGGA. Tyrosine 229 contacts shikimate. Residue glycine 250 participates in NADP(+) binding.

The protein belongs to the shikimate dehydrogenase family. As to quaternary structure, homodimer.

It catalyses the reaction shikimate + NADP(+) = 3-dehydroshikimate + NADPH + H(+). The protein operates within metabolic intermediate biosynthesis; chorismate biosynthesis; chorismate from D-erythrose 4-phosphate and phosphoenolpyruvate: step 4/7. Involved in the biosynthesis of the chorismate, which leads to the biosynthesis of aromatic amino acids. Catalyzes the reversible NADPH linked reduction of 3-dehydroshikimate (DHSA) to yield shikimate (SA). This chain is Shikimate dehydrogenase (NADP(+)), found in Streptococcus pneumoniae (strain Taiwan19F-14).